The sequence spans 319 residues: Zinc finger protein-like 1 homolog (319 aa).

A B box-type; degenerate zinc finger spans residues 1–43 (MGLCKCPKRKVTNLFCYEHRVNVCEFCLVDNHPNCVVQSYLNW). The RING-type; atypical zinc-finger motif lies at 53–101 (CSLCHTTLTQGETIRLNCLHLLHWRCFDDWAASFPPTTAPAGYRCPCCS). The disordered stretch occupies residues 212 to 232 (ESSSDTRPLLRQDRDADNEEN). Over residues 219-232 (PLLRQDRDADNEEN) the composition is skewed to basic and acidic residues. Residues 264–284 (KMAIFVMFLALLALITIITVL) form a helical membrane-spanning segment.

Belongs to the ZFPL1 family.

The protein resides in the membrane. This is Zinc finger protein-like 1 homolog from Caenorhabditis briggsae.